The chain runs to 454 residues: MDPAKELIRITARAFYSTEHVLIIDALAIHSTLNDIDLAHILGMQLKGLRRLVGRLKEDGLISVESRGEKKEGAPPMTTLGKDGQPTSIKERLFYRDWYYLNYHRAIDSIKYRMMKLSKYIESQGAPTTEKKDLVCPRCKSQYTELEVMDNISPMGDFLCHMCQHSLDPATEDDTGENENMKRLNDQLSRIVDIMRNIDSTDVPENDFDTALSHALPIDRGSSNPARRIEIVESKPSIASTKGLSTAPDQISVSVMEDGDGVKIDPEELARRREKEAKQNMLPEWISKSTISGDITSVGAKEAAERASRDAHNMGLRVEDVAEDKKLRTDDDGAMDSYWAALKAEQERQAQQDQDEEEEEEDDDDDEFEDVDVGTASAQPASVPAISVSTPATSAQVSSTATDEDGPAAKRTKVTEAQSNGTAPAAAASSQAAAAESKNGESDEDEDELEFEDI.

An HTH TFE/IIEalpha-type domain is found at 4-111 (AKELIRITAR…NYHRAIDSIK (108 aa)). Positions 327–454 (LRTDDDGAMD…DEDELEFEDI (128 aa)) are disordered. The span at 353-372 (DQDEEEEEEDDDDDEFEDVD) shows a compositional bias: acidic residues. The span at 387–401 (SVSTPATSAQVSSTA) shows a compositional bias: polar residues. Residues 423 to 437 (APAAAASSQAAAAES) are compositionally biased toward low complexity. Over residues 442 to 454 (SDEDEDELEFEDI) the composition is skewed to acidic residues.

Belongs to the TFIIE alpha subunit family.

It is found in the nucleus. Transcription factor; part of the gene cluster that mediates the biosynthesis of enfumafungin, a glycosylated fernene-type triterpenoid with potent antifungal activity, mediated by its interaction with beta-1,3-glucan synthase and the fungal cell wall. Is possibly responsible for the transcription regulation of one or more genes within the gene cluster. The chain is Transcription factor efuD from Hormonema carpetanum.